A 198-amino-acid chain; its full sequence is Pyridoxal 5'-phosphate synthase subunit PdxT (198 aa).

Glycine 52–serine 54 contributes to the L-glutamine binding site. Cysteine 84 (nucleophile) is an active-site residue. Residues arginine 115 and isoleucine 142 to arginine 143 contribute to the L-glutamine site. Catalysis depends on charge relay system residues histidine 178 and glutamate 180.

It belongs to the glutaminase PdxT/SNO family. In the presence of PdxS, forms a dodecamer of heterodimers. Only shows activity in the heterodimer.

The catalysed reaction is aldehydo-D-ribose 5-phosphate + D-glyceraldehyde 3-phosphate + L-glutamine = pyridoxal 5'-phosphate + L-glutamate + phosphate + 3 H2O + H(+). It carries out the reaction L-glutamine + H2O = L-glutamate + NH4(+). Its pathway is cofactor biosynthesis; pyridoxal 5'-phosphate biosynthesis. Its function is as follows. Catalyzes the hydrolysis of glutamine to glutamate and ammonia as part of the biosynthesis of pyridoxal 5'-phosphate. The resulting ammonia molecule is channeled to the active site of PdxS. The chain is Pyridoxal 5'-phosphate synthase subunit PdxT from Archaeoglobus fulgidus (strain ATCC 49558 / DSM 4304 / JCM 9628 / NBRC 100126 / VC-16).